The sequence spans 402 residues: Major outer membrane porin (402 aa).

The N-terminal stretch at 1 to 22 is a signal peptide; it reads MKKLLKSALLFAATGSALSLQA.

This sequence belongs to the chlamydial porin (CP) (TC 1.B.2) family. In terms of assembly, part of a disulfide cross-linked outer membrane complex (COMC) composed of the major outer membrane porin, the small cysteine-rich protein (OmcA) and the large cysteine-rich periplasmic protein (OmcB).

The protein localises to the cell outer membrane. Functionally, in elementary bodies (EBs, the infectious stage, which is able to survive outside the host cell) provides the structural integrity of the outer envelope through disulfide cross-links with the small cysteine-rich protein and the large cysteine-rich periplasmic protein. It has been described in publications as the Sarkosyl-insoluble COMC (Chlamydia outer membrane complex), and serves as the functional equivalent of peptidoglycan. Its function is as follows. Permits diffusion of specific solutes through the outer membrane. The sequence is that of Major outer membrane porin (ompA) from Chlamydia psittaci (Chlamydophila psittaci).